A 67-amino-acid polypeptide reads, in one-letter code: DNA-directed RNA polymerase subunit omega (67 aa).

It belongs to the RNA polymerase subunit omega family. As to quaternary structure, the RNAP catalytic core consists of 2 alpha, 1 beta, 1 beta' and 1 omega subunit. When a sigma factor is associated with the core the holoenzyme is formed, which can initiate transcription.

It carries out the reaction RNA(n) + a ribonucleoside 5'-triphosphate = RNA(n+1) + diphosphate. Promotes RNA polymerase assembly. Latches the N- and C-terminal regions of the beta' subunit thereby facilitating its interaction with the beta and alpha subunits. This is DNA-directed RNA polymerase subunit omega from Cupriavidus metallidurans (strain ATCC 43123 / DSM 2839 / NBRC 102507 / CH34) (Ralstonia metallidurans).